The chain runs to 2278 residues: Protein Ycf2 (2278 aa).

ATP is bound at residue 1632 to 1639 (GSIGTGRS).

It belongs to the Ycf2 family.

The protein localises to the plastid. Its subcellular location is the chloroplast stroma. Probable ATPase of unknown function. Its presence in a non-photosynthetic plant (Epifagus virginiana) and experiments in tobacco indicate that it has an essential function which is probably not related to photosynthesis. This is Protein Ycf2 from Solanum bulbocastanum (Wild potato).